We begin with the raw amino-acid sequence, 335 residues long: Calcium-binding protein TgpCaBP (335 aa).

The chain crosses the membrane as a helical span at residues 30 to 50 (LPLCVFSLFLFSFAFSALSGA). EF-hand domains are found at residues 113–148 (MHQH…SLDQ), 153–188 (QHKK…GKDE), 190–225 (LMKI…GSLN), and 227–262 (VEKT…PHSH). Ca(2+) contacts are provided by Asp126, Asp128, Asp130, Lys132, Glu137, Asp166, Asp168, Asp170, Glu177, Asp203, Asn205, Asp207, Lys209, Glu214, Asp240, Asn242, Asp244, and Glu251. A Prevents secretion from ER motif is present at residues 332–335 (HDEL).

Its subcellular location is the endoplasmic reticulum membrane. The protein resides in the cytoplasm. It localises to the cytosol. Calcium-binding protein. Participates in the efflux of intracellular Ca(2+) and storage of Ca(2+) in the endoplasmic reticulum. Required for gliding, host cell invasion and egress. Required for microneme secretion. The chain is Calcium-binding protein TgpCaBP from Toxoplasma gondii.